The following is a 357-amino-acid chain: DNA replication and repair protein RecF (357 aa).

31-38 (GQNGAGKT) provides a ligand contact to ATP.

This sequence belongs to the RecF family.

It is found in the cytoplasm. The RecF protein is involved in DNA metabolism; it is required for DNA replication and normal SOS inducibility. RecF binds preferentially to single-stranded, linear DNA. It also seems to bind ATP. The sequence is that of DNA replication and repair protein RecF from Coxiella burnetii (strain Dugway 5J108-111).